The primary structure comprises 282 residues: MEMO1 family protein Msm_1438 (282 aa).

This sequence belongs to the MEMO1 family.

The chain is MEMO1 family protein Msm_1438 from Methanobrevibacter smithii (strain ATCC 35061 / DSM 861 / OCM 144 / PS).